The chain runs to 181 residues: Oligoribonuclease (181 aa).

The region spanning 8–171 (LIWIDLEMTG…QDIQESIAEL (164 aa)) is the Exonuclease domain. Residue Tyr129 is part of the active site.

The protein belongs to the oligoribonuclease family.

The protein localises to the cytoplasm. Its function is as follows. 3'-to-5' exoribonuclease specific for small oligoribonucleotides. The sequence is that of Oligoribonuclease from Shewanella baltica (strain OS155 / ATCC BAA-1091).